Here is a 318-residue protein sequence, read N- to C-terminus: Methionyl-tRNA formyltransferase (318 aa).

112-115 provides a ligand contact to (6S)-5,6,7,8-tetrahydrofolate; it reads SILP.

This sequence belongs to the Fmt family.

The catalysed reaction is L-methionyl-tRNA(fMet) + (6R)-10-formyltetrahydrofolate = N-formyl-L-methionyl-tRNA(fMet) + (6S)-5,6,7,8-tetrahydrofolate + H(+). Functionally, attaches a formyl group to the free amino group of methionyl-tRNA(fMet). The formyl group appears to play a dual role in the initiator identity of N-formylmethionyl-tRNA by promoting its recognition by IF2 and preventing the misappropriation of this tRNA by the elongation apparatus. The sequence is that of Methionyl-tRNA formyltransferase from Shewanella baltica (strain OS185).